Here is a 767-residue protein sequence, read N- to C-terminus: Protein NLP3 (767 aa).

3 disordered regions span residues 462-494 (ATPPLTQEDPKGKQVSFSFSSASSLENRKRKTK), 590-622 (INPTQTVHVPPKSPPSSSGSQSSSGSSTCCSSE), and 646-672 (HEDQRPVRVTSSLPPLPSATTPRKAKD). Residues 482–566 (SASSLENRKR…MDSVEGVQGS (85 aa)) enclose the RWP-RK domain. Residues 485 to 506 (SLENRKRKTKAEKDITLDTLRQ) adopt a coiled-coil conformation. Composition is skewed to low complexity over residues 604–622 (PSSSGSQSSSGSSTCCSSE) and 655–667 (TSSLPPLPSATTP). One can recognise a PB1 domain in the interval 673 to 759 (GMKVKAMFGD…ETIRILVHHP (87 aa)).

It is found in the nucleus. Probable transcription factor. This Arabidopsis thaliana (Mouse-ear cress) protein is Protein NLP3 (NLP3).